We begin with the raw amino-acid sequence, 363 residues long: Pyrimidine monooxygenase RutA (363 aa).

FMN contacts are provided by residues 49–50, Asn-115, Glu-124, 140–141, and Ser-190; these read IK and RY.

It belongs to the NtaA/SnaA/DszA monooxygenase family. RutA subfamily.

The catalysed reaction is uracil + FMNH2 + NADH + O2 = (Z)-3-ureidoacrylate + FMN + NAD(+) + H2O + H(+). It catalyses the reaction thymine + FMNH2 + NADH + O2 = (Z)-2-methylureidoacrylate + FMN + NAD(+) + H2O + H(+). Functionally, catalyzes the pyrimidine ring opening between N-3 and C-4 by an unusual flavin hydroperoxide-catalyzed mechanism, adding oxygen atoms in the process to yield ureidoacrylate peracid, that immediately reacts with FMN forming ureidoacrylate and FMN-N(5)-oxide. The FMN-N(5)-oxide reacts spontaneously with NADH to produce FMN. Requires the flavin reductase RutF to regenerate FMN in vivo. The polypeptide is Pyrimidine monooxygenase RutA (Klebsiella variicola (strain At-22)).